We begin with the raw amino-acid sequence, 222 residues long: 2-C-methyl-D-erythritol 4-phosphate cytidylyltransferase (222 aa).

It belongs to the IspD/TarI cytidylyltransferase family. IspD subfamily.

It catalyses the reaction 2-C-methyl-D-erythritol 4-phosphate + CTP + H(+) = 4-CDP-2-C-methyl-D-erythritol + diphosphate. Its pathway is isoprenoid biosynthesis; isopentenyl diphosphate biosynthesis via DXP pathway; isopentenyl diphosphate from 1-deoxy-D-xylulose 5-phosphate: step 2/6. Functionally, catalyzes the formation of 4-diphosphocytidyl-2-C-methyl-D-erythritol from CTP and 2-C-methyl-D-erythritol 4-phosphate (MEP). The polypeptide is 2-C-methyl-D-erythritol 4-phosphate cytidylyltransferase (Thermotoga sp. (strain RQ2)).